The chain runs to 738 residues: Catalase-peroxidase (738 aa).

A compositionally biased stretch (basic and acidic residues) spans 1–16; the sequence is MSENHDAIVTDAKTEE. Residues 1–37 form a disordered region; it reads MSENHDAIVTDAKTEEAGGCPVAHGRAPHPTQGGGNR. A cross-link (tryptophyl-tyrosyl-methioninium (Trp-Tyr) (with M-257)) is located at residues 108-231; sequence WHSAGTYRIS…LGAVQMGLIY (124 aa). H109 (proton acceptor) is an active-site residue. Positions 231–257 form a cross-link, tryptophyl-tyrosyl-methioninium (Tyr-Met) (with W-108); the sequence is YVNPEGPNGNPDPIAAARDIRETFGRM. H272 lines the heme b pocket.

This sequence belongs to the peroxidase family. Peroxidase/catalase subfamily. As to quaternary structure, homodimer or homotetramer. The cofactor is heme b. Post-translationally, formation of the three residue Trp-Tyr-Met cross-link is important for the catalase, but not the peroxidase activity of the enzyme.

It catalyses the reaction H2O2 + AH2 = A + 2 H2O. It carries out the reaction 2 H2O2 = O2 + 2 H2O. Functionally, bifunctional enzyme with both catalase and broad-spectrum peroxidase activity. The polypeptide is Catalase-peroxidase (Streptomyces ambofaciens).